Reading from the N-terminus, the 243-residue chain is Ornithine decarboxylase antizyme 3 (243 aa).

S6, S9, and S12 each carry phosphoserine.

The protein belongs to the ODC antizyme family. In terms of assembly, interacts with ODC1 and thereby sterically blocks ODC homodimerization. Interacts with AZIN2; this interaction disrupts the interaction between the antizyme and ODC1. Interacts with GGN. Isoform 2 interacts with PPP1R16A; Modulates PPP1CB activity. In terms of tissue distribution, testis-specific. Isoform 2 is expressed in outer dense fibers, fibrous sheath and the connecting piece of sperm.

Its subcellular location is the nucleus. The protein resides in the cytoplasm. It is found in the cell projection. It localises to the cilium. The protein localises to the flagellum. In terms of biological role, ornithine decarboxylase (ODC) antizyme protein that negatively regulates ODC activity and intracellular polyamine biosynthesis and uptake in response to increased intracellular polyamine levels. Binds to ODC monomers, inhibiting the assembly of the functional ODC homodimers. Does not target the ODC monomers for degradation, which allows a protein synthesis-independent restoration of ODC activity. Stabilizes AZIN2 by interfering with its ubiquitination. Involved in the translocation of AZNI2 from ER-Golgi intermediate compartment (ERGIC) to the cytosol. Probably plays a key role in spermatogenesis by regulating the intracellular concentration of polyamines in haploid germ cells. Its function is as follows. Does not possess antizyme activity. Modulates PPP1CB activity through its interaction with PPP1R16A. The polypeptide is Ornithine decarboxylase antizyme 3 (Rattus norvegicus (Rat)).